We begin with the raw amino-acid sequence, 220 residues long: Large ribosomal subunit protein eL15 (220 aa).

The segment covering 197–207 has biased composition (basic and acidic residues); the sequence is KKRHEASRGAR. Residues 197–220 are disordered; the sequence is KKRHEASRGARDPWQIAEKLKEEK.

This sequence belongs to the eukaryotic ribosomal protein eL15 family.

The sequence is that of Large ribosomal subunit protein eL15 from Desulfurococcus amylolyticus (strain DSM 18924 / JCM 16383 / VKM B-2413 / 1221n) (Desulfurococcus kamchatkensis).